Consider the following 1088-residue polypeptide: Protein argonaute 18 (1088 aa).

A disordered region spans residues 1 to 220 (MASRGGGQHQ…QPPPDLPQAP (220 aa)). Composition is skewed to gly residues over residues 20-30 (GGYGRGGGGGR), 51-86 (YPGG…GQGR), 95-127 (GRGY…GGYH), 135-148 (GRGG…GGGY), 161-182 (ARGG…YGRG), and 191-206 (GRGG…GGGS). Positions 211 to 220 (QPPPDLPQAP) are enriched in pro residues. Residues 477 to 574 (TVGYFLNNYG…LPMELCNIVP (98 aa)) enclose the PAZ domain. Residues 747-1056 (LLLVVMTDDK…LAFRARFYLT (310 aa)) form the Piwi domain.

The protein belongs to the argonaute family. Ago subfamily.

Functionally, probably involved in the RNA silencing pathway. May bind to short RNAs such as microRNAs (miRNAs) or short interfering RNAs (siRNAs), and represses the translation of mRNAs which are complementary to them. The polypeptide is Protein argonaute 18 (AGO18) (Oryza sativa subsp. japonica (Rice)).